Here is a 243-residue protein sequence, read N- to C-terminus: Pyridoxine 5'-phosphate synthase (243 aa).

Residue N9 coordinates 3-amino-2-oxopropyl phosphate. A 1-deoxy-D-xylulose 5-phosphate-binding site is contributed by 11-12; sequence DH. R20 lines the 3-amino-2-oxopropyl phosphate pocket. Residue H45 is the Proton acceptor of the active site. R47 and H52 together coordinate 1-deoxy-D-xylulose 5-phosphate. The active-site Proton acceptor is E72. T102 is a 1-deoxy-D-xylulose 5-phosphate binding site. Catalysis depends on H193, which acts as the Proton donor. Residues G194 and 215 to 216 each bind 3-amino-2-oxopropyl phosphate; that span reads GH.

This sequence belongs to the PNP synthase family. As to quaternary structure, homooctamer; tetramer of dimers.

The protein resides in the cytoplasm. It catalyses the reaction 3-amino-2-oxopropyl phosphate + 1-deoxy-D-xylulose 5-phosphate = pyridoxine 5'-phosphate + phosphate + 2 H2O + H(+). Its pathway is cofactor biosynthesis; pyridoxine 5'-phosphate biosynthesis; pyridoxine 5'-phosphate from D-erythrose 4-phosphate: step 5/5. Functionally, catalyzes the complicated ring closure reaction between the two acyclic compounds 1-deoxy-D-xylulose-5-phosphate (DXP) and 3-amino-2-oxopropyl phosphate (1-amino-acetone-3-phosphate or AAP) to form pyridoxine 5'-phosphate (PNP) and inorganic phosphate. This chain is Pyridoxine 5'-phosphate synthase, found in Photobacterium profundum (strain SS9).